A 668-amino-acid chain; its full sequence is Echinocandin B biosynthetic cluster protein J (668 aa).

Disordered regions lie at residues 1–20 (MHFA…DQSL), 92–113 (YTPP…PPTP), 224–322 (PLDH…QSAD), 330–349 (EVAE…SIPT), and 483–506 (NCSS…PPLK). Polar residues predominate over residues 96–106 (SLDSRSSATPP). Residues 264–275 (NPEPGTPTPPSP) are compositionally biased toward pro residues. Positions 311 to 322 (YRSTPSPCQSAD) are enriched in polar residues. The span at 484–494 (CSSSSCSSSAS) shows a compositional bias: low complexity. The span at 495 to 505 (KKNEEKREPPL) shows a compositional bias: basic and acidic residues.

The protein operates within antifungal biosynthesis. Part of the gene cluster that mediates the biosynthesis of echinocandin B, a fungal lipidated cyclic hexapeptide that acts as an antifungal agent. Linoleoyl-AMP, produced by the fatty-acyl-AMP ligase ecdI, is transferred to the initiation carrier domain (T0) of ecdA. The linoleoyl-S-phosphopantetheinyl-T0 is sequentially extended with L-ornithine, L-threonine, L-proline, L-homotyrosine, L-threonine, and 4R-methyl-L-proline to form the linear hexapeptide. Thereafter, the terminal condensation (C7) performs macrocyclization of the NRPS product and the cyclic scaffold is released from ecdA. All six of the amino acid residues are hydroxylated, including 4R,5R-dihydroxy-L-ornithine, 4R-hydroxyl-L-proline, 3S,4S-dihydroxy-L-homotyrosine, and 3S-hydroxyl-4S-methyl-L-prolin. In the pathway, all the hydroxylation reactions are proposed to occur following completion of the cyclic peptide, so the unhydroxylated precursor produced by ecdA will undergo six rounds of hydroxylation. Five hydroxylase genes (ecdG, ecdH, ecdK, htyE and htyF) are embedded within the echinocandin B (ecd) and L-homotyrosine (hty) clusters. The protein is Echinocandin B biosynthetic cluster protein J of Aspergillus rugulosus (Emericella rugulosa).